The chain runs to 72 residues: Large ribosomal subunit protein bL28 (72 aa).

The protein belongs to the bacterial ribosomal protein bL28 family.

The protein is Large ribosomal subunit protein bL28 of Chlorobium phaeobacteroides (strain DSM 266 / SMG 266 / 2430).